We begin with the raw amino-acid sequence, 314 residues long: MPVALCTMSHSPLMGRNDPAQTVIDDVDAAFENARTFIADFAPDLIVIFAPDHYNGVYYDLMPPFCIGAAAQSVGDYGTESGPLNVDRDAAYTVAREVLASGVDVAFSERMHVDHGFAQALQLLVGSITAVPTVPIFINSVAEPLGPVSRVRLLGEAVGRAAANLDKRVLFVGSGGLSHDPPVPQFATAPTEVKEKLIDGRNPTEAERNAREQRVIDAGRDFAAGVATIAPLNPEWDRNLLDVLTSGEIEQIDSWTNEWFVEQAGHSSHEVRTWIAAYAAMSAAGKYRVTSTFYREIPEWIAGFGISTAVAVDE.

His-115 functions as the Proton donor in the catalytic mechanism. Catalysis depends on His-179, which acts as the Proton acceptor.

It belongs to the LigB/MhpB extradiol dioxygenase family. Homotetramer. Requires Fe(2+) as cofactor.

The catalysed reaction is 3-(2,3-dihydroxyphenyl)propanoate + O2 = (2Z,4E)-2-hydroxy-6-oxonona-2,4-dienedioate + H(+). It carries out the reaction (2E)-3-(2,3-dihydroxyphenyl)prop-2-enoate + O2 = (2Z,4E,7E)-2-hydroxy-6-oxonona-2,4,7-trienedioate + H(+). It functions in the pathway aromatic compound metabolism; 3-phenylpropanoate degradation. Its function is as follows. Catalyzes the non-heme iron(II)-dependent oxidative cleavage of 2,3-dihydroxyphenylpropionic acid and 2,3-dihydroxicinnamic acid into 2-hydroxy-6-ketononadienedioate and 2-hydroxy-6-ketononatrienedioate, respectively. The protein is 2,3-dihydroxyphenylpropionate/2,3-dihydroxicinnamic acid 1,2-dioxygenase of Rhodococcus jostii (strain RHA1).